We begin with the raw amino-acid sequence, 379 residues long: Mannitol-1-phosphate 5-dehydrogenase (379 aa).

3 to 14 lines the NAD(+) pocket; it reads ALHFGAGNIGRG.

This sequence belongs to the mannitol dehydrogenase family.

It carries out the reaction D-mannitol 1-phosphate + NAD(+) = beta-D-fructose 6-phosphate + NADH + H(+). The protein is Mannitol-1-phosphate 5-dehydrogenase of Bacillus licheniformis (strain ATCC 14580 / DSM 13 / JCM 2505 / CCUG 7422 / NBRC 12200 / NCIMB 9375 / NCTC 10341 / NRRL NRS-1264 / Gibson 46).